Reading from the N-terminus, the 439-residue chain is Histidine--tRNA ligase (439 aa).

Belongs to the class-II aminoacyl-tRNA synthetase family. As to quaternary structure, homodimer.

The protein localises to the cytoplasm. The catalysed reaction is tRNA(His) + L-histidine + ATP = L-histidyl-tRNA(His) + AMP + diphosphate + H(+). The chain is Histidine--tRNA ligase from Clostridium tetani (strain Massachusetts / E88).